Reading from the N-terminus, the 658-residue chain is UvrABC system protein B (658 aa).

Positions 26–414 constitute a Helicase ATP-binding domain; that stretch reads AGLKKGLKHQ…PDVIEQIIRP (389 aa). Residue 39 to 46 participates in ATP binding; it reads GATGTGKT. A Beta-hairpin motif is present at residues 92 to 115; the sequence is YYDYYQPEAYVPQSDTYIEKDASI. A Helicase C-terminal domain is found at 430-592; it reads QIDDLMDEIN…ITPKTIRKEI (163 aa). In terms of domain architecture, UVR spans 622-658; the sequence is DIFIEGMEHEMKEAAKALDFERAAELRDALLEIKAEG.

Belongs to the UvrB family. In terms of assembly, forms a heterotetramer with UvrA during the search for lesions. Interacts with UvrC in an incision complex.

Its subcellular location is the cytoplasm. Its function is as follows. The UvrABC repair system catalyzes the recognition and processing of DNA lesions. A damage recognition complex composed of 2 UvrA and 2 UvrB subunits scans DNA for abnormalities. Upon binding of the UvrA(2)B(2) complex to a putative damaged site, the DNA wraps around one UvrB monomer. DNA wrap is dependent on ATP binding by UvrB and probably causes local melting of the DNA helix, facilitating insertion of UvrB beta-hairpin between the DNA strands. Then UvrB probes one DNA strand for the presence of a lesion. If a lesion is found the UvrA subunits dissociate and the UvrB-DNA preincision complex is formed. This complex is subsequently bound by UvrC and the second UvrB is released. If no lesion is found, the DNA wraps around the other UvrB subunit that will check the other stand for damage. This is UvrABC system protein B from Listeria innocua serovar 6a (strain ATCC BAA-680 / CLIP 11262).